We begin with the raw amino-acid sequence, 244 residues long: Phosphoadenosine 5'-phosphosulfate reductase (244 aa).

Residue C239 is the Nucleophile; cysteine thiosulfonate intermediate of the active site.

Belongs to the PAPS reductase family. CysH subfamily.

The protein resides in the cytoplasm. It carries out the reaction [thioredoxin]-disulfide + sulfite + adenosine 3',5'-bisphosphate + 2 H(+) = [thioredoxin]-dithiol + 3'-phosphoadenylyl sulfate. It functions in the pathway sulfur metabolism; hydrogen sulfide biosynthesis; sulfite from sulfate: step 3/3. Functionally, catalyzes the formation of sulfite from phosphoadenosine 5'-phosphosulfate (PAPS) using thioredoxin as an electron donor. This is Phosphoadenosine 5'-phosphosulfate reductase from Escherichia coli O8 (strain IAI1).